Here is a 473-residue protein sequence, read N- to C-terminus: Photosystem II CP43 reaction center protein (473 aa).

A propeptide spanning residues 1–14 (MKTLYSPRRFYPVE) is cleaved from the precursor. Thr-15 carries the post-translational modification N-acetylthreonine. The residue at position 15 (Thr-15) is a Phosphothreonine. The next 5 helical transmembrane spans lie at 69-93 (LFEVAHFIPEKPMYEQGLILLPHLA), 134-155 (LIGPETLEESFPFFGYAWKDRN), 178-200 (KALFFGGIYDTWAPGGGDVRKIT), 255-275 (KPFAWTRRAFVWSGEAYLSYS), and 291-312 (WFNNTAYPSEFYGPTGPEASQA). Glu-367 provides a ligand contact to [CaMn4O5] cluster. A helical membrane pass occupies residues 447–471 (RARAAAAGFEKGIDRDLEPVLFMTP).

Belongs to the PsbB/PsbC family. PsbC subfamily. PSII is composed of 1 copy each of membrane proteins PsbA, PsbB, PsbC, PsbD, PsbE, PsbF, PsbH, PsbI, PsbJ, PsbK, PsbL, PsbM, PsbT, PsbX, PsbY, PsbZ, Psb30/Ycf12, at least 3 peripheral proteins of the oxygen-evolving complex and a large number of cofactors. It forms dimeric complexes. Binds multiple chlorophylls and provides some of the ligands for the Ca-4Mn-5O cluster of the oxygen-evolving complex. It may also provide a ligand for a Cl- that is required for oxygen evolution. PSII binds additional chlorophylls, carotenoids and specific lipids. serves as cofactor.

The protein resides in the plastid. It localises to the chloroplast thylakoid membrane. Its function is as follows. One of the components of the core complex of photosystem II (PSII). It binds chlorophyll and helps catalyze the primary light-induced photochemical processes of PSII. PSII is a light-driven water:plastoquinone oxidoreductase, using light energy to abstract electrons from H(2)O, generating O(2) and a proton gradient subsequently used for ATP formation. In Welwitschia mirabilis (Tree tumbo), this protein is Photosystem II CP43 reaction center protein.